A 131-amino-acid chain; its full sequence is MNLEVKCPILGFEDTKNMNFYKIDEVFYRLKSLDGKDFSFVMIDPYMIRPDYDFEVPDYYQELLALNEQTNFGVFVIVAINEPLEESTVNFLAPVVMNYDNNSLVQVILDTSKYPNYFQSEKISAFIKQTK.

It belongs to the FliW family. In terms of assembly, interacts with translational regulator CsrA and flagellin(s).

The protein localises to the cytoplasm. Acts as an anti-CsrA protein, binds CsrA and prevents it from repressing translation of its target genes, one of which is flagellin. Binds to flagellin and participates in the assembly of the flagellum. The protein is Flagellar assembly factor FliW of Campylobacter lari (strain RM2100 / D67 / ATCC BAA-1060).